The primary structure comprises 500 residues: Histidine--tRNA ligase (500 aa).

The protein belongs to the class-II aminoacyl-tRNA synthetase family. Homodimer.

The protein resides in the cytoplasm. The catalysed reaction is tRNA(His) + L-histidine + ATP = L-histidyl-tRNA(His) + AMP + diphosphate + H(+). This is Histidine--tRNA ligase from Ruegeria sp. (strain TM1040) (Silicibacter sp.).